Consider the following 218-residue polypeptide: Variable small protein 8 (218 aa).

The first 18 residues, 1 to 18 (MRKRISAIIMTLFMVFMS), serve as a signal peptide directing secretion. Cys-19 carries the N-palmitoyl cysteine lipid modification. The S-diacylglycerol cysteine moiety is linked to residue Cys-19.

The protein belongs to the variable small protein (Vsp) family.

The protein localises to the cell outer membrane. Its function is as follows. The Vlp and Vsp proteins are antigenically distinct proteins, only one vlp or vsp gene is transcriptionally active at any one time. Switching between these genes is a mechanism of host immune response evasion. The polypeptide is Variable small protein 8 (Borrelia hermsii).